Reading from the N-terminus, the 85-residue chain is Acylphosphatase (85 aa).

The Acylphosphatase-like domain maps to 3-85 (AARFVVSGVV…PARFRRLKTL (83 aa)). Residues arginine 18 and asparagine 36 contribute to the active site. The interval 66-85 (PPRSRRSRARPARFRRLKTL) is disordered.

The protein belongs to the acylphosphatase family.

It catalyses the reaction an acyl phosphate + H2O = a carboxylate + phosphate + H(+). This chain is Acylphosphatase (acyP), found in Xanthomonas axonopodis pv. citri (strain 306).